Reading from the N-terminus, the 195-residue chain is N-(5'-phosphoribosyl)anthranilate isomerase (195 aa).

This sequence belongs to the TrpF family.

The catalysed reaction is N-(5-phospho-beta-D-ribosyl)anthranilate = 1-(2-carboxyphenylamino)-1-deoxy-D-ribulose 5-phosphate. The protein operates within amino-acid biosynthesis; L-tryptophan biosynthesis; L-tryptophan from chorismate: step 3/5. In Streptococcus gordonii (strain Challis / ATCC 35105 / BCRC 15272 / CH1 / DL1 / V288), this protein is N-(5'-phosphoribosyl)anthranilate isomerase.